Reading from the N-terminus, the 259-residue chain is UPF0246 protein PFLU_0992 (259 aa).

It belongs to the UPF0246 family.

This Pseudomonas fluorescens (strain SBW25) protein is UPF0246 protein PFLU_0992.